The sequence spans 421 residues: MTKSIQAIRGMSDTLPEEIPYWSFLENACRSVVSAYHYREIRFPVVEQTALFKRTIGEATDIVEKEMYTFTDRNGDSLTLRPEGTAGCVRAGIQNGLFYNQIQRLWYLGPMFRHERPQKGRYRQFYQLGVETYGMAGAPIEAELIFMCLRLWKALGLESCIHLELNTLGTLDSRNAYRQALVTYLQSREKELDEDSRRRLHTNPLRILDSKNPDLQPLLAEAPKLIDYLDETSRRHFDQLRSLLDQAEVPFIVNPTLVRGLDYYTHTVFEWVTDQLGAQGTVCAGGRYDNLVELLGGKSTPAAGFAAGLERLVLLLRGVQECLDKIDIYVVIAGEAVIQEGLLMTEQLRNVLPEWVIEADLSGSSLKSQFKRADKSGAKWALVIGEEEIKTNTVTLKHLRETVPQKSLTRDTLIPYLKSEG.

This sequence belongs to the class-II aminoacyl-tRNA synthetase family. Homodimer.

The protein resides in the cytoplasm. It carries out the reaction tRNA(His) + L-histidine + ATP = L-histidyl-tRNA(His) + AMP + diphosphate + H(+). This is Histidine--tRNA ligase from Coxiella burnetii (strain Dugway 5J108-111).